Reading from the N-terminus, the 289-residue chain is 4-hydroxy-tetrahydrodipicolinate synthase (289 aa).

Threonine 46 provides a ligand contact to pyruvate. Catalysis depends on tyrosine 134, which acts as the Proton donor/acceptor. Lysine 162 (schiff-base intermediate with substrate) is an active-site residue. Pyruvate is bound at residue valine 204.

The protein belongs to the DapA family. Homotetramer; dimer of dimers.

Its subcellular location is the cytoplasm. The catalysed reaction is L-aspartate 4-semialdehyde + pyruvate = (2S,4S)-4-hydroxy-2,3,4,5-tetrahydrodipicolinate + H2O + H(+). It functions in the pathway amino-acid biosynthesis; L-lysine biosynthesis via DAP pathway; (S)-tetrahydrodipicolinate from L-aspartate: step 3/4. In terms of biological role, catalyzes the condensation of (S)-aspartate-beta-semialdehyde [(S)-ASA] and pyruvate to 4-hydroxy-tetrahydrodipicolinate (HTPA). The chain is 4-hydroxy-tetrahydrodipicolinate synthase from Bacillus velezensis (strain DSM 23117 / BGSC 10A6 / LMG 26770 / FZB42) (Bacillus amyloliquefaciens subsp. plantarum).